The primary structure comprises 534 residues: Pentatricopeptide repeat-containing protein At2g20540 (534 aa).

PPR repeat units follow at residues 41-71 (SSFMVTKMVDFCDKIEDMDYATRLFNQVSNP), 72-106 (NVFLYNSIIRAYTHNSLYCDVIRIYKQLLRKSFEL), 108-142 (DRFTFPFMFKSCASLGSCYLGKQVHGHLCKFGPRF), 143-173 (HVVTENALIDMYMKFDDLVDAHKVFDEMYER), 174-208 (DVISWNSLLSGYARLGQMKKAKGLFHLMLDKTIVS), 209-239 (WTAMISGYTGIGCYVEAMDFFREMQLAGIEP), 240-274 (DEISLISVLPSCAQLGSLELGKWIHLYAERRGFLK), 275-305 (QTGVCNALIEMYSKCGVISQAIQLFGQMEGK), 306-340 (DVISWSTMISGYAYHGNAHGAIETFNEMQRAKVKP), 341-371 (NGITFLGLLSACSHVGMWQEGLRYFDMMRQD), and 377-407 (KIEHYGCLIDVLARAGKLERAVEITKTMPMK). Residues 412–487 (IWGSLLSSCR…TPGGSLIEVN (76 aa)) form a type E motif region. Residues 488 to 518 (NIVQEFVSGDNSKPFWTEISIVLQLFTSHQD) are type E(+) motif.

Belongs to the PPR family. PCMP-E subfamily.

This is Pentatricopeptide repeat-containing protein At2g20540 (PCMP-E78) from Arabidopsis thaliana (Mouse-ear cress).